Reading from the N-terminus, the 179-residue chain is Putative cleavage and polyadenylation specificity factor subunit 4-like protein (179 aa).

5 consecutive C3H1-type zinc fingers follow at residues 35–61, 62–89, 90–117, 118–145, and 146–169; these read KSAS…RHDR, GEKM…HQYD, LTRM…HVKP, AFKS…HVPR, and IMCL…QKIR.

It belongs to the CPSF4/YTH1 family.

In Homo sapiens (Human), this protein is Putative cleavage and polyadenylation specificity factor subunit 4-like protein (CPSF4L).